The sequence spans 194 residues: dTTP/UTP pyrophosphatase (194 aa).

D68 (proton acceptor) is an active-site residue.

This sequence belongs to the Maf family. YhdE subfamily. A divalent metal cation serves as cofactor.

The protein resides in the cytoplasm. The catalysed reaction is dTTP + H2O = dTMP + diphosphate + H(+). The enzyme catalyses UTP + H2O = UMP + diphosphate + H(+). In terms of biological role, nucleoside triphosphate pyrophosphatase that hydrolyzes dTTP and UTP. May have a dual role in cell division arrest and in preventing the incorporation of modified nucleotides into cellular nucleic acids. The sequence is that of dTTP/UTP pyrophosphatase from Clostridioides difficile (strain 630) (Peptoclostridium difficile).